A 374-amino-acid polypeptide reads, in one-letter code: MKLLGLYINIPWPTKRYKYHDFKFPEYKKKINEKKYIHHLLQDLKKDSLLVPNRTINTIFIGGIAPNFFKLTSIKYLLKKIKNIIPISKNAENTIEFHISKLSEKKIFYYKKFGINRFSIRIQTFDQKKFNSLSKVHISKNILHKIKKINIEKFKNINLDLIYGLPKQSLQEALLDLKTAISLKPNHISWCEFYIEKNNNNYKNLSKSCNLNIIWKIFLQGEKLLKKSGYKKYEISSYSKTNYQCLHNLNYWKFGDYLGIGCNAHGKITQKNGKIIKTIKNKNLKKFMNGKYTYKNHIISKKNLSLEFFMNRLRLNTPIYRKDFKKYTYISEFYIKNEIKQAIEQNYLIETKKYWKMTSKGIQFLDSLLEIFIT.

The Radical SAM core domain maps to 1-231 (MKLLGLYINI…EKLLKKSGYK (231 aa)).

Belongs to the anaerobic coproporphyrinogen-III oxidase family. HemW subfamily.

It localises to the cytoplasm. Might be a heme chaperone; in E.coli heme binds independently of binding to [4Fe-4S] or S-adenosyl-L-methionine. The chain is Putative heme chaperone HemW-like protein from Buchnera aphidicola subsp. Baizongia pistaciae (strain Bp).